Consider the following 495-residue polypeptide: Glycerol kinase (495 aa).

Threonine 13 contributes to the ADP binding site. The ATP site is built by threonine 13, threonine 14, and serine 15. Threonine 13 is a binding site for sn-glycerol 3-phosphate. An ADP-binding site is contributed by arginine 17. Sn-glycerol 3-phosphate contacts are provided by arginine 83, glutamate 84, tyrosine 135, and aspartate 244. Glycerol contacts are provided by arginine 83, glutamate 84, tyrosine 135, aspartate 244, and glutamine 245. The ADP site is built by threonine 266 and glycine 309. Residues threonine 266, glycine 309, glutamine 313, and glycine 410 each contribute to the ATP site. ADP-binding residues include glycine 410 and asparagine 414.

Belongs to the FGGY kinase family.

The catalysed reaction is glycerol + ATP = sn-glycerol 3-phosphate + ADP + H(+). The protein operates within polyol metabolism; glycerol degradation via glycerol kinase pathway; sn-glycerol 3-phosphate from glycerol: step 1/1. Inhibited by fructose 1,6-bisphosphate (FBP). Functionally, key enzyme in the regulation of glycerol uptake and metabolism. Catalyzes the phosphorylation of glycerol to yield sn-glycerol 3-phosphate. The polypeptide is Glycerol kinase (Shewanella woodyi (strain ATCC 51908 / MS32)).